Reading from the N-terminus, the 186-residue chain is Ribosome-recycling factor (186 aa).

This sequence belongs to the RRF family.

Its subcellular location is the cytoplasm. Its function is as follows. Responsible for the release of ribosomes from messenger RNA at the termination of protein biosynthesis. May increase the efficiency of translation by recycling ribosomes from one round of translation to another. The chain is Ribosome-recycling factor from Pelodictyon phaeoclathratiforme (strain DSM 5477 / BU-1).